A 515-amino-acid chain; its full sequence is MTKRALISVSDKSGIVDFAKELKNLGWDIISTGGTKVALDDAGVETIAIDDVTGFPEMMDGRVKTLHPNIHGGLLARRDADSHLQAAKDNNIELIDLVVVNLYPFKETILRPDITYDLAVENIDIGGPSMLRSAAKNHASVTVVVDPADYATVLGELADAGQTTFETRQRLAAKVFRHTAAYDALIAEYFTTQVGEARPEKLTITYDLKQAMRYGENPQQDADFYQKALPTDYSIASAKQLNGKELSFNNIRDADAAIRIIRDFKDRPTVVVLKHMNPCGIGQADDIETAWDYAYEADPVSIFGGIVVLNREVDAATAKKMHPIFLEIIIAPSYSEEALAIFTNKKKNLRILELPFDAQAASEVEAEYTGVVGGLLVQNQDVVAENPSDWQVVTDRQPTEQEATALEFAWKAIKYVKSNGIIITNDHMTLGLGAGQTNRVGSVKIAIEQAKDHLDGTVLASDAFFPFADNIEEIAAAGIKAIIQPGGSVRDQDSIDAANKHGLTMIFTGVRHFRH.

An MGS-like domain is found at 1–145 (MTKRALISVS…KNHASVTVVV (145 aa)).

The protein belongs to the PurH family.

It carries out the reaction (6R)-10-formyltetrahydrofolate + 5-amino-1-(5-phospho-beta-D-ribosyl)imidazole-4-carboxamide = 5-formamido-1-(5-phospho-D-ribosyl)imidazole-4-carboxamide + (6S)-5,6,7,8-tetrahydrofolate. The catalysed reaction is IMP + H2O = 5-formamido-1-(5-phospho-D-ribosyl)imidazole-4-carboxamide. Its pathway is purine metabolism; IMP biosynthesis via de novo pathway; 5-formamido-1-(5-phospho-D-ribosyl)imidazole-4-carboxamide from 5-amino-1-(5-phospho-D-ribosyl)imidazole-4-carboxamide (10-formyl THF route): step 1/1. It functions in the pathway purine metabolism; IMP biosynthesis via de novo pathway; IMP from 5-formamido-1-(5-phospho-D-ribosyl)imidazole-4-carboxamide: step 1/1. This is Bifunctional purine biosynthesis protein PurH from Streptococcus pyogenes serotype M2 (strain MGAS10270).